Consider the following 199-residue polypeptide: Chaperone protein TorD (199 aa).

The protein belongs to the TorD/DmsD family. TorD subfamily.

The protein localises to the cytoplasm. Involved in the biogenesis of TorA. Acts on TorA before the insertion of the molybdenum cofactor and, as a result, probably favors a conformation of the apoenzyme that is competent for acquiring the cofactor. In Escherichia coli O127:H6 (strain E2348/69 / EPEC), this protein is Chaperone protein TorD.